The sequence spans 536 residues: Probable cytochrome P450 520A1 (536 aa).

A helical membrane pass occupies residues 1–21; the sequence is MEILTFIIYLITFFILFDFYK. Residue cysteine 479 coordinates heme.

This sequence belongs to the cytochrome P450 family. The cofactor is heme.

It localises to the membrane. This Dictyostelium discoideum (Social amoeba) protein is Probable cytochrome P450 520A1 (cyp520A1).